Here is a 37-residue protein sequence, read N- to C-terminus: Protein 6.3 (37 aa).

The chain is Protein 6.3 from Escherichia phage T7 (Bacteriophage T7).